The sequence spans 130 residues: Small ribosomal subunit protein uS11 (130 aa).

The protein belongs to the universal ribosomal protein uS11 family. In terms of assembly, part of the 30S ribosomal subunit. Interacts with proteins S7 and S18. Binds to IF-3.

Its function is as follows. Located on the platform of the 30S subunit, it bridges several disparate RNA helices of the 16S rRNA. Forms part of the Shine-Dalgarno cleft in the 70S ribosome. The sequence is that of Small ribosomal subunit protein uS11 from Acidiphilium cryptum (strain JF-5).